A 219-amino-acid polypeptide reads, in one-letter code: Triosephosphate isomerase (219 aa).

6-8 (NYK) is a binding site for substrate. The active-site Electrophile is the histidine 90. Residue glutamate 138 is the Proton acceptor of the active site. Substrate contacts are provided by residues isoleucine 143, glycine 178, and 199-200 (AS).

This sequence belongs to the triosephosphate isomerase family. In terms of assembly, homotetramer; dimer of dimers.

Its subcellular location is the cytoplasm. The enzyme catalyses D-glyceraldehyde 3-phosphate = dihydroxyacetone phosphate. It participates in carbohydrate biosynthesis; gluconeogenesis. Its pathway is carbohydrate degradation; glycolysis; D-glyceraldehyde 3-phosphate from glycerone phosphate: step 1/1. In terms of biological role, involved in the gluconeogenesis. Catalyzes stereospecifically the conversion of dihydroxyacetone phosphate (DHAP) to D-glyceraldehyde-3-phosphate (G3P). This is Triosephosphate isomerase from Methanocaldococcus jannaschii (strain ATCC 43067 / DSM 2661 / JAL-1 / JCM 10045 / NBRC 100440) (Methanococcus jannaschii).